The chain runs to 387 residues: Growth-regulating factor 3 (387 aa).

Residues 53 to 88 form the QLQ domain; the sequence is PFTAAQYEELEQQALIYKYLVAGVPVPADLLLPIRR. 2 consecutive short sequence motifs (bipartite nuclear localization signal) follow at residues 111 to 129 and 147 to 154; these read KKLD…KKWR and RGRNRSRK. Positions 114-158 constitute a WRC domain; it reads DPEPGRCRRTDGKKWRCSKEAAPDSKYCERHMHRGRNRSRKPVEA. Residues 145-176 are disordered; sequence MHRGRNRSRKPVEAQLVAPHSQPPATAPAAAV.

This sequence belongs to the GRF family.

The protein resides in the nucleus. Its function is as follows. Transcription activator that plays a regulatory role in gibberellin-induced stem elongation. This Oryza sativa subsp. japonica (Rice) protein is Growth-regulating factor 3 (GRF3).